The chain runs to 573 residues: Protein FAM200A (573 aa).

Residues 1 to 51 are disordered; the sequence is MTPESRDTTDLSPGGTQEMEGIVIVKVEEEDEEDHFQKERNKVESSPQVLS. Residues 1-513 lie on the Extracellular side of the membrane; the sequence is MTPESRDTTD…DDFPLLSRKS (513 aa). A helical membrane pass occupies residues 514-533; sequence ILLLLPFTTTYLCELGFSIL. Topologically, residues 534-573 are cytoplasmic; the sequence is TRLKTKKRNRLNSAPDMRVALSSCVPDWKELMNRQAHPSH.

This sequence belongs to the FAM200 family.

Its subcellular location is the membrane. The protein is Protein FAM200A (FAM200A) of Homo sapiens (Human).